The sequence spans 118 residues: uncharacterized protein (118 aa).

A disordered region spans residues 25–85 (AEQPGSGGIA…SSSSTPSRAR (61 aa)). Residues 71 to 83 (RPSASSSSSTPSR) show a composition bias toward low complexity.

This is an uncharacterized protein from Azospirillum brasilense.